The following is a 425-amino-acid chain: Serine--tRNA ligase (425 aa).

230–232 (TAE) is a binding site for L-serine. 261–263 (RSE) is a binding site for ATP. E284 contributes to the L-serine binding site. Residue 348-351 (EISS) participates in ATP binding. S384 lines the L-serine pocket.

This sequence belongs to the class-II aminoacyl-tRNA synthetase family. Type-1 seryl-tRNA synthetase subfamily. In terms of assembly, homodimer. The tRNA molecule binds across the dimer.

It localises to the cytoplasm. The catalysed reaction is tRNA(Ser) + L-serine + ATP = L-seryl-tRNA(Ser) + AMP + diphosphate + H(+). It catalyses the reaction tRNA(Sec) + L-serine + ATP = L-seryl-tRNA(Sec) + AMP + diphosphate + H(+). It participates in aminoacyl-tRNA biosynthesis; selenocysteinyl-tRNA(Sec) biosynthesis; L-seryl-tRNA(Sec) from L-serine and tRNA(Sec): step 1/1. Functionally, catalyzes the attachment of serine to tRNA(Ser). Is also able to aminoacylate tRNA(Sec) with serine, to form the misacylated tRNA L-seryl-tRNA(Sec), which will be further converted into selenocysteinyl-tRNA(Sec). This Streptococcus pyogenes serotype M4 (strain MGAS10750) protein is Serine--tRNA ligase.